The primary structure comprises 316 residues: MATKRKIGDGYSSSDDNQPKRERSEGGEDQQLVPYNSGAFNVKHDETGVMCYFTPSSIQLEPHELTKMLWQEQMAINVKRGNFSILNCSCFEGRFLKNEFCRLSNLNSLHEWEDKLYPEPDKNIVVLEPANGKTTYTIGPRVQGKPCGFWFSDFGTIKRAKSNFGQFFSIQYGDIHKHNNIFGNILQKHLQSDFPLKMEPNVCIHLPDKNKTSERDMLIRRFYIINRDNNGSIYATGKIRNVPLDMQRMSVEDFDRLFEMDKIDGPSEEIKMYMMGTIDGVKYGKEMQMTDMNNKKITEKPYSLAFKPGIFVIIEQ.

The segment at Met-1–Pro-34 is disordered. Basic and acidic residues predominate over residues Asn-17–Gly-26.

This is an uncharacterized protein from Lepidoptera (butterflies and moths).